A 409-amino-acid polypeptide reads, in one-letter code: Na(+)/H(+) antiporter NhaA 2 (409 aa).

Transmembrane regions (helical) follow at residues 10 to 30, 60 to 80, 89 to 109, 118 to 138, 148 to 168, 171 to 191, 203 to 223, 224 to 244, 257 to 277, 283 to 303, 328 to 348, and 356 to 376; these read VAAG…NTPA, GLLV…FLAG, LVPA…YLAI, GWPV…AVFG, FLLA…AVFF, GLDL…AVVG, IAVV…TLSS, GIHA…LSGL, IVLP…IGLA, FWGI…AGGL, LLGG…FAGL, and TLAV…TLSI. Residues 384–409 are disordered; sequence AGAAADDDDATRDDFPAHADGGPARA.

The protein belongs to the NhaA Na(+)/H(+) (TC 2.A.33) antiporter family.

It is found in the cell membrane. It carries out the reaction Na(+)(in) + 2 H(+)(out) = Na(+)(out) + 2 H(+)(in). Its function is as follows. Na(+)/H(+) antiporter that extrudes sodium in exchange for external protons. The chain is Na(+)/H(+) antiporter NhaA 2 from Clavibacter michiganensis subsp. michiganensis (strain NCPPB 382).